A 467-amino-acid polypeptide reads, in one-letter code: ATP synthase subunit beta (467 aa).

150–157 (GGAGVGKT) lines the ATP pocket.

It belongs to the ATPase alpha/beta chains family. F-type ATPases have 2 components, CF(1) - the catalytic core - and CF(0) - the membrane proton channel. CF(1) has five subunits: alpha(3), beta(3), gamma(1), delta(1), epsilon(1). CF(0) has three main subunits: a(1), b(2) and c(9-12). The alpha and beta chains form an alternating ring which encloses part of the gamma chain. CF(1) is attached to CF(0) by a central stalk formed by the gamma and epsilon chains, while a peripheral stalk is formed by the delta and b chains.

The protein resides in the cell inner membrane. The enzyme catalyses ATP + H2O + 4 H(+)(in) = ADP + phosphate + 5 H(+)(out). Produces ATP from ADP in the presence of a proton gradient across the membrane. The catalytic sites are hosted primarily by the beta subunits. The protein is ATP synthase subunit beta of Aliivibrio fischeri (strain ATCC 700601 / ES114) (Vibrio fischeri).